Consider the following 257-residue polypeptide: Zinc transporter ZupT (257 aa).

The next 3 membrane-spanning stretches (helical) occupy residues 5–25 (LILTILAGAATFIGAFLGVLG), 32–52 (LLAFSLGFAAGIMLLISLMEM), and 61–81 (GMSPVLGYGMFIFGLLGYFGL). Asn-120 and Glu-123 together coordinate Fe(2+). Zn(2+) is bound by residues Glu-123 and His-148. The next 4 membrane-spanning stretches (helical) occupy residues 137-157 (LGFGIALAVALHNIPEGLAVA), 171-191 (ILWAGISGLAEILGGVLAWLI), 195-215 (MISPVVMAAIMAAVAGIMVAL), and 236-256 (GVLCGMSVMGFSLVLLQTAGI). Positions 149, 152, and 181 each coordinate Fe(2+). Position 152 (Glu-152) interacts with Zn(2+).

Belongs to the ZIP transporter (TC 2.A.5) family. ZupT subfamily.

It localises to the cell inner membrane. It catalyses the reaction Zn(2+)(in) = Zn(2+)(out). Its function is as follows. Mediates zinc uptake. May also transport other divalent cations. The chain is Zinc transporter ZupT from Escherichia coli O45:K1 (strain S88 / ExPEC).